The primary structure comprises 437 residues: MNRSRSESLFQKAQSLIVGGVNSPSRSFKAVGGGAPVFMEKAKGAYFWDVDGNQYIDYLAAYGPIITGHAHPHITNAIQRAAENGVLYGTPTKLENQFASMLQQAIPSLEKVRFVNSGTEAVMTTIRVARAYTGRDKIIKFAGCYHGHSDLVLVAAGSGPSTLGTPDSAGVTKNIAEEVITVPFNQLDSLKEALDHWGEEVAAVLVEPIVGNFGIVEPHEGFLEGVNELAHNAGALVIYDEVITAFRFMYEGAQNYVGVEPDMTALGKIIGGGLPIGAYGGRIDIMEKVAPLGPAYQAGTMAGNPASMSAGIACLEVLQEEGLYDELDRKGAILEKGIKAHAEAHGITISINRLKGALTVYFTDETVTCYEQAERSDGEKFSLFFKEMLNQGINLAPSKYEAWFLTIAHTDEDIEKTLQAVDHAFSVMAAKGYHLKR.

The residue at position 268 (Lys268) is an N6-(pyridoxal phosphate)lysine.

It belongs to the class-III pyridoxal-phosphate-dependent aminotransferase family. HemL subfamily. As to quaternary structure, homodimer. It depends on pyridoxal 5'-phosphate as a cofactor.

It localises to the cytoplasm. The catalysed reaction is (S)-4-amino-5-oxopentanoate = 5-aminolevulinate. It participates in porphyrin-containing compound metabolism; protoporphyrin-IX biosynthesis; 5-aminolevulinate from L-glutamyl-tRNA(Glu): step 2/2. This is Glutamate-1-semialdehyde 2,1-aminomutase 1 from Halalkalibacterium halodurans (strain ATCC BAA-125 / DSM 18197 / FERM 7344 / JCM 9153 / C-125) (Bacillus halodurans).